A 420-amino-acid chain; its full sequence is 3-isopropylmalate dehydratase large subunit (420 aa).

[4Fe-4S] cluster contacts are provided by Cys-300, Cys-360, and Cys-363.

The protein belongs to the aconitase/IPM isomerase family. LeuC type 2 subfamily. As to quaternary structure, heterodimer of LeuC and LeuD. [4Fe-4S] cluster serves as cofactor.

It carries out the reaction (2R,3S)-3-isopropylmalate = (2S)-2-isopropylmalate. The protein operates within amino-acid biosynthesis; L-leucine biosynthesis; L-leucine from 3-methyl-2-oxobutanoate: step 2/4. In terms of biological role, catalyzes the isomerization between 2-isopropylmalate and 3-isopropylmalate, via the formation of 2-isopropylmaleate. The polypeptide is 3-isopropylmalate dehydratase large subunit (Helicobacter hepaticus (strain ATCC 51449 / 3B1)).